A 459-amino-acid chain; its full sequence is Ribulose bisphosphate carboxylase (459 aa).

Asn-111 contacts substrate. The active-site Proton acceptor is the Lys-166. Lys-168 is a binding site for substrate. Mg(2+)-binding residues include Lys-191, Asp-193, and Glu-194. Residue Lys-191 is modified to N6-carboxylysine. Catalysis depends on His-287, which acts as the Proton acceptor. Substrate is bound by residues Arg-288, His-321, and Ser-368.

This sequence belongs to the RuBisCO large chain family. Type II subfamily. In terms of assembly, homodimer. It depends on Mg(2+) as a cofactor.

It carries out the reaction 2 (2R)-3-phosphoglycerate + 2 H(+) = D-ribulose 1,5-bisphosphate + CO2 + H2O. It catalyses the reaction D-ribulose 1,5-bisphosphate + O2 = 2-phosphoglycolate + (2R)-3-phosphoglycerate + 2 H(+). RuBisCO catalyzes two reactions: the carboxylation of D-ribulose 1,5-bisphosphate, the primary event in carbon dioxide fixation, as well as the oxidative fragmentation of the pentose substrate. Both reactions occur simultaneously and in competition at the same active site. In Albidiferax ferrireducens (strain ATCC BAA-621 / DSM 15236 / T118) (Rhodoferax ferrireducens), this protein is Ribulose bisphosphate carboxylase.